The sequence spans 160 residues: Protein Vago (160 aa).

Residues 1 to 23 form the signal peptide; the sequence is MESISSMIYLVAMMSLIIGGSQA.

In terms of tissue distribution, expressed in fat body.

It localises to the secreted. Its function is as follows. Probably involved in the antiviral immune response. May have a role in controlling viral load in the adult fat body, after infection with viruses such as the Drosophila C virus. The polypeptide is Protein Vago (Drosophila melanogaster (Fruit fly)).